Reading from the N-terminus, the 548-residue chain is Glutamate--tRNA ligase (548 aa).

Residues 102-112 (PSPSGPLHIGH) carry the 'HIGH' region motif.

Belongs to the class-I aminoacyl-tRNA synthetase family. Glutamate--tRNA ligase type 2 subfamily.

It localises to the cytoplasm. The enzyme catalyses tRNA(Glu) + L-glutamate + ATP = L-glutamyl-tRNA(Glu) + AMP + diphosphate. Catalyzes the attachment of glutamate to tRNA(Glu) in a two-step reaction: glutamate is first activated by ATP to form Glu-AMP and then transferred to the acceptor end of tRNA(Glu). The chain is Glutamate--tRNA ligase from Thermoplasma acidophilum (strain ATCC 25905 / DSM 1728 / JCM 9062 / NBRC 15155 / AMRC-C165).